A 417-amino-acid polypeptide reads, in one-letter code: WD repeat and FYVE domain-containing protein 2 (417 aa).

4 WD repeats span residues 29-68, 119-157, 202-241, and 245-284; these read GHVA…QFWP, CHAG…NKVG, AHTN…GEAY, and GHNG…VETP. An FYVE-type zinc finger spans residues 286-357; that stretch reads WKTSDCCQKC…ICNDCAGRMK (72 aa). The Zn(2+) site is built by cysteine 292, cysteine 295, cysteine 319, cysteine 322, cysteine 327, cysteine 330, cysteine 349, and cysteine 352. The stretch at 373-412 is one WD 5 repeat; sequence EIRTGITAMHLQETLGLLVTSGQNRVVMIWDVRSVCSAPS.

Functionally, plays a role in coelomocyte endocytosis. This Caenorhabditis briggsae protein is WD repeat and FYVE domain-containing protein 2.